We begin with the raw amino-acid sequence, 117 residues long: Large ribosomal subunit protein bL20 (117 aa).

Belongs to the bacterial ribosomal protein bL20 family.

Binds directly to 23S ribosomal RNA and is necessary for the in vitro assembly process of the 50S ribosomal subunit. It is not involved in the protein synthesizing functions of that subunit. The chain is Large ribosomal subunit protein bL20 from Pelobacter propionicus (strain DSM 2379 / NBRC 103807 / OttBd1).